A 95-amino-acid polypeptide reads, in one-letter code: Co-chaperonin GroES (95 aa).

This sequence belongs to the GroES chaperonin family. Heptamer of 7 subunits arranged in a ring. Interacts with the chaperonin GroEL.

The protein localises to the cytoplasm. In terms of biological role, together with the chaperonin GroEL, plays an essential role in assisting protein folding. The GroEL-GroES system forms a nano-cage that allows encapsulation of the non-native substrate proteins and provides a physical environment optimized to promote and accelerate protein folding. GroES binds to the apical surface of the GroEL ring, thereby capping the opening of the GroEL channel. In Pelobacter propionicus (strain DSM 2379 / NBRC 103807 / OttBd1), this protein is Co-chaperonin GroES.